A 398-amino-acid polypeptide reads, in one-letter code: Stearoyl-[acyl-carrier-protein] 9-desaturase, chloroplastic (398 aa).

The transit peptide at 1–34 directs the protein to the chloroplast; sequence MALKLNPLASQPYNFPSSARPPISTFRSPKFLCL. Glu-140, Glu-178, His-181, Glu-231, Glu-264, and His-267 together coordinate Fe cation.

The protein belongs to the fatty acid desaturase type 2 family. As to quaternary structure, homodimer. Fe(2+) is required as a cofactor.

The protein localises to the plastid. Its subcellular location is the chloroplast. The catalysed reaction is octadecanoyl-[ACP] + 2 reduced [2Fe-2S]-[ferredoxin] + O2 + 2 H(+) = (9Z)-octadecenoyl-[ACP] + 2 oxidized [2Fe-2S]-[ferredoxin] + 2 H2O. It participates in lipid metabolism; fatty acid metabolism. Its function is as follows. Converts stearoyl-ACP to oleoyl-ACP by introduction of a cis double bond between carbons 9 and 10 of the acyl chain. The polypeptide is Stearoyl-[acyl-carrier-protein] 9-desaturase, chloroplastic (Brassica napus (Rape)).